The chain runs to 413 residues: MFRLSDFNYHDKVIFLRADLNSPVKDGKIISDARFRAVLHTIRYLLEHKAKVVIGTHQSKPYEEDYLTTEQHAEILSSLLGVKVKYVDDIFGKCARDAIKALKPSEVLMLENLRFAAEETKQNPLEYCERTHFVRKLSPLIDYVVNEAFAAAHRSQPSLVGFARIRPMIPGFLMEKEIKALTRAYESLERPKIYVLGGAKVEDSLNVAENVLRNEKADLILTGGLVGHVFTLAKGFDLGDANISFLDEKGLIKLVDRAEIILNEFYPYIRTPVDFAVEYKGERVEIDLLSDKQWIFDERPILDIGSRTIEKYSEILKEASIIVANGPMGVFEIEEFAKGTVEVFKAIGESKAFSIVGGGHSIASIYQYNIKGISHISTGGGAMLTFFAGQSLPVLQALKISYEKFKNKKELNQ.

Residues 19 to 21, Arg-34, 57 to 60, Arg-114, and Arg-154 contribute to the substrate site; these read DLN and HQSK. ATP is bound by residues Glu-332 and 358–361; that span reads GGHS.

The protein belongs to the phosphoglycerate kinase family. Monomer.

It is found in the cytoplasm. It catalyses the reaction (2R)-3-phosphoglycerate + ATP = (2R)-3-phospho-glyceroyl phosphate + ADP. It functions in the pathway carbohydrate degradation; glycolysis; pyruvate from D-glyceraldehyde 3-phosphate: step 2/5. In Thermococcus sibiricus (strain DSM 12597 / MM 739), this protein is Phosphoglycerate kinase.